Reading from the N-terminus, the 621-residue chain is Stimulated by retinoic acid gene 6 protein-like (621 aa).

The Extracellular portion of the chain corresponds to 1–21 (MLAASTRTRQINITCDNPVDR). Residue N12 is glycosylated (N-linked (GlcNAc...) asparagine). Residues 22 to 42 (EVFLHYSLIPSLCIILVLSFL) traverse the membrane as a helical segment. At 43–53 (QRREHRRQRDD) the chain is on the cytoplasmic side. A helical membrane pass occupies residues 54–74 (TSYLLGNHFGIIVPLDFVGTF). The Extracellular segment spans residues 75–110 (SNRWSYGAAFGATANKVMFLFSEGYQPLTVPQWAQA). Residues 111–131 (FVLFIGGMEVGLSYFPFFACL) form a helical membrane-spanning segment. The Cytoplasmic portion of the chain corresponds to 132–137 (SSEFQL). Residues 138 to 158 (VSSILGFSYSLTWFVVTVLQI) form a helical membrane-spanning segment. Over 159–173 (SQCPHGQFLGRFETL) the chain is Extracellular. A helical membrane pass occupies residues 174–194 (VFYWPSLLCLGFLLGRFLHMF). At 195 to 258 (LKALPVHLGL…CFQFPSRMVG (64 aa)) the chain is on the cytoplasmic side. Residues 259–279 (TLLLAFICLYLFIVIEFCVFL) form a helical membrane-spanning segment. Residues 280–321 (HVRDKLDMFEDKLESYLTHMNETGTLTPIILQVKELISVTKG) lie on the Extracellular side of the membrane. The helical transmembrane segment at 322–342 (VWVVTILPAALTCVTYLFHIL) threads the bilayer. The Cytoplasmic segment spans residues 343 to 383 (ACYRKHMKRLWAGDKHFLPQKFHSPSSAASVVAIARYSGWQ). Residues 384 to 404 (IAYILWGYLIIHVVQSLCGVM) traverse the membrane as a helical segment. Over 405-424 (LMYGLVLPIIHHRGLEMLQG) the chain is Extracellular. The chain crosses the membrane as a helical span at residues 425 to 445 (FGLGVLTLSIVVGLIILQVWI). Residues 446 to 476 (AGTFFLQPKLGTSDKQKPLALNNRRAFHNFN) lie on the Cytoplasmic side of the membrane. Residues 477–497 (YFLFFYNVLLGLGACLSRLLI) form a helical membrane-spanning segment. The Extracellular portion of the chain corresponds to 498–621 (SCLLGTWLIA…TQILLTCSDC (124 aa)). At T612 the chain carries Phosphothreonine.

Glycosylated. As to expression, highly expressed in liver and small intestine. Also expressed in spleen, kidney, colon, stomach, placenta, adipose tissue and isolated adipocytes.

Its subcellular location is the cell membrane. Functionally, acts as a high-affinity cell-surface receptor for retinol-binding protein RBP4 and mediates RBP4-dependent retinol uptake in the liver. This is Stimulated by retinoic acid gene 6 protein-like from Mus musculus (Mouse).